The primary structure comprises 265 residues: NAD kinase (265 aa).

Asp-45 (proton acceptor) is an active-site residue. NAD(+)-binding positions include 45–46 (DG), 121–122 (NE), Arg-147, Asp-149, 160–165 (TAYSKS), Ala-184, and Gln-222.

This sequence belongs to the NAD kinase family. A divalent metal cation serves as cofactor.

The protein resides in the cytoplasm. The catalysed reaction is NAD(+) + ATP = ADP + NADP(+) + H(+). Its function is as follows. Involved in the regulation of the intracellular balance of NAD and NADP, and is a key enzyme in the biosynthesis of NADP. Catalyzes specifically the phosphorylation on 2'-hydroxyl of the adenosine moiety of NAD to yield NADP. This Lacticaseibacillus paracasei (strain ATCC 334 / BCRC 17002 / CCUG 31169 / CIP 107868 / KCTC 3260 / NRRL B-441) (Lactobacillus paracasei) protein is NAD kinase.